Reading from the N-terminus, the 493-residue chain is Ribosomal protein uS12 methylthiotransferase RimO (493 aa).

An MTTase N-terminal domain is found at 5 to 121 (RTVALVTLGC…ISDRLQTILN (117 aa)). Residues Cys14, Cys50, and Cys84 each coordinate [4Fe-4S] cluster. Residues 153–177 (LPGHGPTDLPEGVAPASGPRAPLRR) form a disordered region. Positions 179–410 (LDGSPVASVK…RLAEELVSQR (232 aa)) constitute a Radical SAM core domain. [4Fe-4S] cluster is bound by residues Cys193, Cys197, and Cys200. A TRAM domain is found at 412-482 (DERVGATVRV…GVDLVAEPLL (71 aa)).

It belongs to the methylthiotransferase family. RimO subfamily. The cofactor is [4Fe-4S] cluster.

The protein localises to the cytoplasm. It carries out the reaction L-aspartate(89)-[ribosomal protein uS12]-hydrogen + (sulfur carrier)-SH + AH2 + 2 S-adenosyl-L-methionine = 3-methylsulfanyl-L-aspartate(89)-[ribosomal protein uS12]-hydrogen + (sulfur carrier)-H + 5'-deoxyadenosine + L-methionine + A + S-adenosyl-L-homocysteine + 2 H(+). Catalyzes the methylthiolation of an aspartic acid residue of ribosomal protein uS12. This Streptomyces coelicolor (strain ATCC BAA-471 / A3(2) / M145) protein is Ribosomal protein uS12 methylthiotransferase RimO.